The primary structure comprises 281 residues: Phosphonates import ATP-binding protein PhnC (281 aa).

The 244-residue stretch at 2-245 folds into the ABC transporter domain; the sequence is FELKDVTRRF…AVKEIYGTDK (244 aa). ATP is bound at residue 34–41; the sequence is GRSGAGKS.

This sequence belongs to the ABC transporter superfamily. Phosphonates importer (TC 3.A.1.9.1) family. In terms of assembly, the complex is composed of two ATP-binding proteins (PhnC), two transmembrane proteins (PhnE) and a solute-binding protein (PhnD).

It is found in the cell inner membrane. The catalysed reaction is phosphonate(out) + ATP + H2O = phosphonate(in) + ADP + phosphate + H(+). Its function is as follows. Part of the ABC transporter complex PhnCDE involved in phosphonates import. Responsible for energy coupling to the transport system. The polypeptide is Phosphonates import ATP-binding protein PhnC (Rhizobium etli (strain ATCC 51251 / DSM 11541 / JCM 21823 / NBRC 15573 / CFN 42)).